The chain runs to 513 residues: ATP synthase subunit alpha (513 aa).

Residue 169–176 (GDRQTGKT) coordinates ATP.

Belongs to the ATPase alpha/beta chains family. In terms of assembly, F-type ATPases have 2 components, CF(1) - the catalytic core - and CF(0) - the membrane proton channel. CF(1) has five subunits: alpha(3), beta(3), gamma(1), delta(1), epsilon(1). CF(0) has three main subunits: a(1), b(2) and c(9-12). The alpha and beta chains form an alternating ring which encloses part of the gamma chain. CF(1) is attached to CF(0) by a central stalk formed by the gamma and epsilon chains, while a peripheral stalk is formed by the delta and b chains.

Its subcellular location is the cell inner membrane. The enzyme catalyses ATP + H2O + 4 H(+)(in) = ADP + phosphate + 5 H(+)(out). Functionally, produces ATP from ADP in the presence of a proton gradient across the membrane. The alpha chain is a regulatory subunit. This chain is ATP synthase subunit alpha, found in Methylobacillus flagellatus (strain ATCC 51484 / DSM 6875 / VKM B-1610 / KT).